The following is a 758-amino-acid chain: Spastin (758 aa).

The interval 1–99 is disordered; that stretch reads MVRTKNQSSS…PTTCSPRSGH (99 aa). The Cytoplasmic portion of the chain corresponds to 1–121; the sequence is MVRTKNQSSS…KQNLYVVSFP (121 aa). The tract at residues 1–210 is required for localization to punctate cytoplasmic foci; it reads MVRTKNQSSS…RPIQPLEMAA (210 aa). Low complexity-rich tracts occupy residues 8 to 29, 43 to 58, 66 to 76, and 85 to 95; these read SSSS…SATG, RSSS…AGGS, SSNRRSPGSSP, and TDDLTPTTCSP. An intramembrane region (helical) is located at residues 122-142; sequence IIFLFNVLRSLIYQLFCIFRY. Over 143–758 the chain is Cytoplasmic; it reads LYGASTKVIY…WSQDYGDITI (616 aa). Polar residues-rich tracts occupy residues 169–180 and 189–198; these read SKEQQQSLNHPS and QEQQLSNQPQ. Residues 169–221 form a disordered region; the sequence is SKEQQQSLNHPSELNRDSDGQEQQLSNQPQRFRPIQPLEMAANRPGGGYSPGP. Positions 208 to 758 are sufficient for interaction with microtubules and microtubule severing; that stretch reads MAANRPGGGY…WSQDYGDITI (551 aa). Residues 233–308 form the MIT domain; it reads HRRAFEYISK…SMARDRLHFL (76 aa). Disordered stretches follow at residues 353-376 and 390-454; these read RVRS…GRKL and NKSQ…ASTP. Composition is skewed to polar residues over residues 390–406 and 425–454; these read NKSQ…TSVG and QFSS…ASTP. Residues 443–455 form a required for interaction with microtubules region; that stretch reads NNGPSGSGASTPV. 523–530 is an ATP binding site; it reads GPPGNGKT.

It belongs to the AAA ATPase family. Spastin subfamily. As to quaternary structure, homohexamer. The homohexamer is stabilized by ATP-binding. The homohexamer may adopt a ring conformation through which microtubules pass prior to being severed. Interacts with microtubules. Interacts with atl; may be involved in microtubule dynamics.

The protein resides in the membrane. It localises to the cytoplasm. Its subcellular location is the cytoskeleton. It is found in the microtubule organizing center. The protein localises to the centrosome. The protein resides in the chromosome. It localises to the lipid droplet. The enzyme catalyses n ATP + n H2O + a microtubule = n ADP + n phosphate + (n+1) alpha/beta tubulin heterodimers.. In terms of biological role, ATP-dependent microtubule severing protein. Stimulates microtubule minus-end depolymerization and poleward microtubule flux in the mitotic spindle. Regulates microtubule stability in the neuromuscular junction synapse. Involved in lipid metabolism by regulating the size and distribution of lipid droplets. Involved in axon regeneration by regulating microtubule severing. The sequence is that of Spastin from Drosophila yakuba (Fruit fly).